A 76-amino-acid polypeptide reads, in one-letter code: Serine proteinase inhibitor IA-1 (76 aa).

Residue serine 1 is modified to N-acetylserine.

The protein belongs to the protease inhibitor I9 family.

Functionally, specifically inhibits an endogenous intracellular serine proteinase (proteinase A). The sequence is that of Serine proteinase inhibitor IA-1 from Pleurotus ostreatus (Oyster mushroom).